The primary structure comprises 156 residues: Ribosomal RNA large subunit methyltransferase H (156 aa).

Residues Leu-73, Gly-104, and 123-128 contribute to the S-adenosyl-L-methionine site; that span reads VSSLTL.

The protein belongs to the RNA methyltransferase RlmH family. Homodimer.

It is found in the cytoplasm. The catalysed reaction is pseudouridine(1915) in 23S rRNA + S-adenosyl-L-methionine = N(3)-methylpseudouridine(1915) in 23S rRNA + S-adenosyl-L-homocysteine + H(+). In terms of biological role, specifically methylates the pseudouridine at position 1915 (m3Psi1915) in 23S rRNA. The polypeptide is Ribosomal RNA large subunit methyltransferase H (Paraburkholderia phymatum (strain DSM 17167 / CIP 108236 / LMG 21445 / STM815) (Burkholderia phymatum)).